The following is a 140-amino-acid chain: Ribosome-binding factor A (140 aa).

Residues 1–13 (MQKKSSSKSHRAT) show a composition bias toward basic residues. Residues 1–22 (MQKKSSSKSHRATRGPSQRQLR) form a disordered region.

Belongs to the RbfA family. In terms of assembly, monomer. Binds 30S ribosomal subunits, but not 50S ribosomal subunits or 70S ribosomes.

It is found in the cytoplasm. Its function is as follows. One of several proteins that assist in the late maturation steps of the functional core of the 30S ribosomal subunit. Associates with free 30S ribosomal subunits (but not with 30S subunits that are part of 70S ribosomes or polysomes). Required for efficient processing of 16S rRNA. May interact with the 5'-terminal helix region of 16S rRNA. This is Ribosome-binding factor A from Parvibaculum lavamentivorans (strain DS-1 / DSM 13023 / NCIMB 13966).